Reading from the N-terminus, the 552-residue chain is MLSDIEIAKQARLKDIRDIAKFLDIPEDMLKPYGRYIAKVDHRYLNTLNAKPNGKLILVTAITPTPAGEGKTTTSIGLSMALNRIGKKSIVTLREPSLGPVFGVKGGAAGGGYSQVLPMEDINLHFTGDIHAVTTAHNLIAAMIDAHINHGNELGIDLRKIYWKRAMDMNDRALREIVIALGGSANGYPREDGFLITAASEIMAVLCLAKDLTDLKRRIGEIVIAQGKNGLVRVKDIQAEGAAAALLKDAINPNLVQTIENTPAFVHGGPFANIAHGTNTLIATKLALKLSDYVVTEAGFAADLGAQKFLDFVAPTGGLFVDAVVIVASIRAMKYHGGVSKDNLNEENVDAVIKGLENLKVHIENMKKYGVPVVVALNRFSTDTEKEIEAVLKNSPAKCVLNEAYAKGSEGAIELAKAVVETIENVPSNYKPLVPSDLPVEQKIELIAKEIYRAGKVIYTDTAKSKLSMLKKNGFGNYPVIIAKTQNSISDDPKKINAPSGYEFTVRDFQISAGAGFVVALAGEIMLMPGLPKAPAAVNIDIDENGEITGLF.

65–72 (TPAGEGKT) serves as a coordination point for ATP.

Belongs to the formate--tetrahydrofolate ligase family.

The enzyme catalyses (6S)-5,6,7,8-tetrahydrofolate + formate + ATP = (6R)-10-formyltetrahydrofolate + ADP + phosphate. Its pathway is one-carbon metabolism; tetrahydrofolate interconversion. The sequence is that of Formate--tetrahydrofolate ligase from Fervidobacterium nodosum (strain ATCC 35602 / DSM 5306 / Rt17-B1).